Consider the following 63-residue polypeptide: Large ribosomal subunit protein uL29 (63 aa).

This sequence belongs to the universal ribosomal protein uL29 family.

This is Large ribosomal subunit protein uL29 from Photorhabdus laumondii subsp. laumondii (strain DSM 15139 / CIP 105565 / TT01) (Photorhabdus luminescens subsp. laumondii).